We begin with the raw amino-acid sequence, 220 residues long: GTP cyclohydrolase 1 (220 aa).

Cys-109, His-112, and Cys-180 together coordinate Zn(2+).

Belongs to the GTP cyclohydrolase I family. Homomer.

It carries out the reaction GTP + H2O = 7,8-dihydroneopterin 3'-triphosphate + formate + H(+). It functions in the pathway cofactor biosynthesis; 7,8-dihydroneopterin triphosphate biosynthesis; 7,8-dihydroneopterin triphosphate from GTP: step 1/1. This chain is GTP cyclohydrolase 1, found in Pectobacterium carotovorum subsp. carotovorum (strain PC1).